The sequence spans 241 residues: Sec-independent protein translocase protein TatC (241 aa).

6 helical membrane-spanning segments follow: residues 27–47 (LIIV…FSAG), 76–96 (LTMC…YEAF), 122–142 (FVAG…SIVI), 161–181 (IVTN…IIVL), 193–213 (LVKG…FFSP), and 217–237 (LFSQ…SMVL).

It belongs to the TatC family. As to quaternary structure, forms a complex with TatA.

Its subcellular location is the cell membrane. In terms of biological role, part of the twin-arginine translocation (Tat) system that transports large folded proteins containing a characteristic twin-arginine motif in their signal peptide across membranes. In Methanocella arvoryzae (strain DSM 22066 / NBRC 105507 / MRE50), this protein is Sec-independent protein translocase protein TatC.